A 601-amino-acid polypeptide reads, in one-letter code: Testis-specific gene 10 protein (601 aa).

The span at 1-10 shows a compositional bias: basic residues; sequence MMRSRSKSPR. 2 disordered regions span residues 1–20 and 563–588; these read MMRSRSKSPRRPSPTARGAN and VSSTMKPNTKCHSPERAHHRSPDRGL. An interaction with HIF1A region spans residues 459–592; that stretch reads QMTNERISMQ…SPDRGLDRSL (134 aa). Over residues 563–573 the composition is skewed to polar residues; that stretch reads VSSTMKPNTKC. Residues 574–588 are compositionally biased toward basic and acidic residues; it reads HSPERAHHRSPDRGL. Position 591 is a phosphoserine (Ser-591).

It belongs to the CEP135/TSGA10 family. Interacts with HIF1A. Post-translationally, processed into N-terminal 27-kDa and C-terminal 55-kDa fragments.

The protein localises to the cytoplasm. The protein resides in the cytoskeleton. It is found in the microtubule organizing center. It localises to the centrosome. Its subcellular location is the centriole. Functionally, plays a role in spermatogenesis. When overexpressed, prevents nuclear localization of HIF1A. In Macaca fascicularis (Crab-eating macaque), this protein is Testis-specific gene 10 protein (TSGA10).